The chain runs to 539 residues: CTP synthase (539 aa).

The tract at residues 1–267 (MTKYIFVTGG…DQKVCDFLHL (267 aa)) is amidoligase domain. Ser13 serves as a coordination point for CTP. Position 13 (Ser13) interacts with UTP. 14-19 (SLGKGI) provides a ligand contact to ATP. Position 54 (Tyr54) interacts with L-glutamine. Residue Asp71 coordinates ATP. Residues Asp71 and Glu141 each coordinate Mg(2+). Residues 148–150 (DIE), 188–193 (KTKPTQ), and Lys224 each bind CTP. Residues 188-193 (KTKPTQ) and Lys224 each bind UTP. The 244-residue stretch at 294-537 (KITLVGKYVE…IGAASGLPAQ (244 aa)) folds into the Glutamine amidotransferase type-1 domain. Residue Gly356 coordinates L-glutamine. The active-site Nucleophile; for glutamine hydrolysis is the Cys383. Residues 384-387 (LGMQ), Glu407, and Arg465 each bind L-glutamine. Residues His510 and Glu512 contribute to the active site.

This sequence belongs to the CTP synthase family. In terms of assembly, homotetramer.

It carries out the reaction UTP + L-glutamine + ATP + H2O = CTP + L-glutamate + ADP + phosphate + 2 H(+). The catalysed reaction is L-glutamine + H2O = L-glutamate + NH4(+). It catalyses the reaction UTP + NH4(+) + ATP = CTP + ADP + phosphate + 2 H(+). Its pathway is pyrimidine metabolism; CTP biosynthesis via de novo pathway; CTP from UDP: step 2/2. Allosterically activated by GTP, when glutamine is the substrate; GTP has no effect on the reaction when ammonia is the substrate. The allosteric effector GTP functions by stabilizing the protein conformation that binds the tetrahedral intermediate(s) formed during glutamine hydrolysis. Inhibited by the product CTP, via allosteric rather than competitive inhibition. Catalyzes the ATP-dependent amination of UTP to CTP with either L-glutamine or ammonia as the source of nitrogen. Regulates intracellular CTP levels through interactions with the four ribonucleotide triphosphates. In Lactobacillus acidophilus (strain ATCC 700396 / NCK56 / N2 / NCFM), this protein is CTP synthase.